The chain runs to 145 residues: Cytochrome c550 (145 aa).

An N-terminal signal peptide occupies residues 1 to 24 (MNKNNVLRGLLVLAGLSLSSLALA). Residues 60 to 142 (LAVEIGASAY…AIRSYLESVH (83 aa)) form the Cytochrome c domain. Heme c-binding residues include Cys73, Cys76, His77, and Met119.

In terms of assembly, monomer. Interacts with the quinoprotein ethanol dehydrogenase (QEDH) ExaA. Post-translationally, binds 1 heme group per subunit.

It is found in the periplasm. Its pathway is alcohol metabolism; ethanol degradation; acetate from ethanol. In terms of biological role, is an essential component of the ethanol oxidation system that allows P.aeruginosa to grow on ethanol as the sole carbon and energy source. Is the direct electron acceptor of the quinoprotein ethanol dehydrogenase (QEDH). The sequence is that of Cytochrome c550 from Pseudomonas aeruginosa (strain ATCC 15692 / DSM 22644 / CIP 104116 / JCM 14847 / LMG 12228 / 1C / PRS 101 / PAO1).